The following is a 205-amino-acid chain: Probable GTP-binding protein EngB (205 aa).

Residues 22 to 198 form the EngB-type G domain; that stretch reads HLPEYAFIGR…LSYIDEVNQD (177 aa). Residues 30–37, 57–61, 75–78, 142–145, and 177–179 contribute to the GTP site; these read GRSNVGKS, GKTQL, DLPG, TKAD, and TSA. Residues Ser37 and Thr59 each coordinate Mg(2+).

The protein belongs to the TRAFAC class TrmE-Era-EngA-EngB-Septin-like GTPase superfamily. EngB GTPase family. It depends on Mg(2+) as a cofactor.

Its function is as follows. Necessary for normal cell division and for the maintenance of normal septation. In Flavobacterium psychrophilum (strain ATCC 49511 / DSM 21280 / CIP 103535 / JIP02/86), this protein is Probable GTP-binding protein EngB.